The sequence spans 50 residues: Bacterioferritin (50 aa).

The 50-residue stretch at 1 to 50 (MKGDPKVIDYLNKALRHELTAINQYWLHYRLLDNWGIKDLAKKWRAESIE) folds into the Ferritin-like diiron domain. E18 is a binding site for Fe cation.

Belongs to the bacterioferritin family. As to quaternary structure, homooligomer of 24 subunits, arranged as 12 dimers, that are packed together to form an approximately spherical molecule with a central cavity, in which large amounts of iron can be deposited. Requires heme b as cofactor.

It carries out the reaction 4 Fe(2+) + O2 + 4 H(+) = 4 Fe(3+) + 2 H2O. The enzyme catalyses Fe(2+)(in) = Fe(2+)(out). Its function is as follows. Iron-storage protein, whose ferroxidase center binds Fe(2+), oxidizes it using dioxygen to Fe(3+), and participates in the subsequent Fe(3+) oxide mineral core formation within the central cavity of the BFR protein shell. Functionally, may act as one of the electron carriers in the reverse electron-transport system from cytochrome c-552 to NADP(+). This Nitrobacter winogradskyi (Nitrobacter agilis) protein is Bacterioferritin (bfr).